The sequence spans 486 residues: UDP-N-acetylmuramate--L-alanine ligase (486 aa).

Position 126–132 (126–132 (GTHGKTS)) interacts with ATP.

The protein belongs to the MurCDEF family.

The protein localises to the cytoplasm. It catalyses the reaction UDP-N-acetyl-alpha-D-muramate + L-alanine + ATP = UDP-N-acetyl-alpha-D-muramoyl-L-alanine + ADP + phosphate + H(+). It functions in the pathway cell wall biogenesis; peptidoglycan biosynthesis. Functionally, cell wall formation. The protein is UDP-N-acetylmuramate--L-alanine ligase of Corynebacterium glutamicum (strain ATCC 13032 / DSM 20300 / JCM 1318 / BCRC 11384 / CCUG 27702 / LMG 3730 / NBRC 12168 / NCIMB 10025 / NRRL B-2784 / 534).